The following is a 44-amino-acid chain: F420-non-reducing hydrogenase vhu subunit U (44 aa).

Residues Sec20 and Cys23 each contribute to the Ni(2+) site. A non-standard amino acid (selenocysteine) is located at residue Sec20. Positions 27 to 44 (MIVEDAEGNVVFEIVNDE) are cleaved as a propeptide — removed in mature form.

It belongs to the [NiFe]/[NiFeSe] hydrogenase large subunit family. As to quaternary structure, the F420-non-reducing hydrogenase vhu is composed of four subunits; VhuA, VhuD, VhuG and VhuU. It depends on Ni(2+) as a cofactor.

In Methanococcus voltae, this protein is F420-non-reducing hydrogenase vhu subunit U (vhuU).